Consider the following 690-residue polypeptide: Eukaryotic translation initiation factor 3 subunit B (690 aa).

Basic and acidic residues predominate over residues 1–11; the sequence is MAKKKSEEHSG. The disordered stretch occupies residues 1–36; the sequence is MAKKKSEEHSGADANDSDYQEEPNFEDPPGFVDNIS. Residues 15–25 show a composition bias toward acidic residues; the sequence is NDSDYQEEPNF. One can recognise an RRM domain in the interval 57-141; that stretch reads SVVVVDNIPK…HTFAVNLFTD (85 aa). 5 WD repeats span residues 207-246, 293-331, 334-369, 442-484, and 530-575; these read TRER…KIQK, DGMS…LLDL, IKIP…TLME, EIRE…KPSL, and PDHF…IKRT. A coiled-coil region spans residues 595–645; the sequence is EEKQKEIKKNLKKYYAAFEQKDRLRLTRASKELLEKRSQLRETFMEYRNKR.

This sequence belongs to the eIF-3 subunit B family. As to quaternary structure, component of the eukaryotic translation initiation factor 3 (eIF-3) complex. The eIF-3 complex interacts with pix. Interacts with mxt.

It is found in the cytoplasm. In terms of biological role, RNA-binding component of the eukaryotic translation initiation factor 3 (eIF-3) complex, which is involved in protein synthesis of a specialized repertoire of mRNAs and, together with other initiation factors, stimulates binding of mRNA and methionyl-tRNAi to the 40S ribosome. The eIF-3 complex specifically targets and initiates translation of a subset of mRNAs involved in cell proliferation. This chain is Eukaryotic translation initiation factor 3 subunit B, found in Drosophila erecta (Fruit fly).